The primary structure comprises 152 residues: Protein SprT-like (152 aa).

The region spanning 7-148 (QRLVEEVSLQ…GKCKGKLILI (142 aa)) is the SprT-like domain. Histidine 67 contacts Zn(2+). Glutamate 68 is an active-site residue. Histidine 71 lines the Zn(2+) pocket.

The protein belongs to the SprT family. It depends on Zn(2+) as a cofactor.

The protein resides in the cytoplasm. The polypeptide is Protein SprT-like (Bacillus thuringiensis subsp. konkukian (strain 97-27)).